We begin with the raw amino-acid sequence, 310 residues long: Coproporphyrin III ferrochelatase (310 aa).

Fe-coproporphyrin III-binding positions include Tyr13, Arg30, 46-47 (RY), Ser54, and Tyr125. Fe(2+)-binding residues include His183 and Glu264.

This sequence belongs to the ferrochelatase family.

It localises to the cytoplasm. The catalysed reaction is Fe-coproporphyrin III + 2 H(+) = coproporphyrin III + Fe(2+). It functions in the pathway porphyrin-containing compound metabolism; protoheme biosynthesis. Functionally, involved in coproporphyrin-dependent heme b biosynthesis. Catalyzes the insertion of ferrous iron into coproporphyrin III to form Fe-coproporphyrin III. This is Coproporphyrin III ferrochelatase from Geobacillus sp. (strain WCH70).